Consider the following 266-residue polypeptide: 3-methyl-2-oxobutanoate hydroxymethyltransferase 2 (266 aa).

Residues Asp-45 and Asp-84 each contribute to the Mg(2+) site. 3-methyl-2-oxobutanoate-binding positions include 45 to 46 (DS), Asp-84, and Lys-112. A Mg(2+)-binding site is contributed by Glu-114. Glu-181 functions as the Proton acceptor in the catalytic mechanism.

This sequence belongs to the PanB family. In terms of assembly, homodecamer; pentamer of dimers. It depends on Mg(2+) as a cofactor.

It localises to the cytoplasm. The enzyme catalyses 3-methyl-2-oxobutanoate + (6R)-5,10-methylene-5,6,7,8-tetrahydrofolate + H2O = 2-dehydropantoate + (6S)-5,6,7,8-tetrahydrofolate. Its pathway is cofactor biosynthesis; (R)-pantothenate biosynthesis; (R)-pantoate from 3-methyl-2-oxobutanoate: step 1/2. Its function is as follows. Catalyzes the reversible reaction in which hydroxymethyl group from 5,10-methylenetetrahydrofolate is transferred onto alpha-ketoisovalerate to form ketopantoate. The polypeptide is 3-methyl-2-oxobutanoate hydroxymethyltransferase 2 (Pseudomonas entomophila (strain L48)).